A 221-amino-acid chain; its full sequence is 3-dehydroquinate dehydratase (221 aa).

3-dehydroquinate is bound by residues 33 to 35 (EIR) and Arg-63. The Proton donor/acceptor role is filled by His-118. Catalysis depends on Lys-144, which acts as the Schiff-base intermediate with substrate. Residues Arg-181, Thr-200, and Gln-204 each contribute to the 3-dehydroquinate site.

Belongs to the type-I 3-dehydroquinase family. Homodimer.

It carries out the reaction 3-dehydroquinate = 3-dehydroshikimate + H2O. It functions in the pathway metabolic intermediate biosynthesis; chorismate biosynthesis; chorismate from D-erythrose 4-phosphate and phosphoenolpyruvate: step 3/7. In terms of biological role, involved in the third step of the chorismate pathway, which leads to the biosynthesis of aromatic amino acids. Catalyzes the cis-dehydration of 3-dehydroquinate (DHQ) and introduces the first double bond of the aromatic ring to yield 3-dehydroshikimate. The chain is 3-dehydroquinate dehydratase from Methanothermobacter thermautotrophicus (strain ATCC 29096 / DSM 1053 / JCM 10044 / NBRC 100330 / Delta H) (Methanobacterium thermoautotrophicum).